The following is a 2250-amino-acid chain: MGIFTLCSCGVPCPTRSFYRRHMASGCDLLPTRQQLADVGYTEPTVIAEVVTPPTQAPLELFVEISPPVLAPFEPSVEISLPIQAPAEPIVEASPPAATQFVGIEALIASGPCFFGSFGPFEEYYSSPVGPLTRFDTLRREGHCAARARVAAVAAKAVIVQQTLSETAAAMRATLPLWMKGQVAPPVKSKRALKREAKAKAKADYLASDEAYYKATDGLTALPPGVSRDVHMRQLDAMEVAYLAHVGDVAARGFQRRQVLRAAYKARCEKRAFKRFLEEVDFLCLPVHIVDKIQTPFDGEQAAAPEMQKGMVYATSRRQVKTRRSFSSFLPKEDFSFTLGVCPARSPTVTPSSTPSTSRSSSPEPRVSSPSGVLPEKAACIGFCSHGSECTEHFCFGYLNLKSEALASQYLAWLLQTKLPGGISCFELEVSSYLEQCQDTMEAIDLWWHAMDRYCFNFKSSKYVILDNFLCKHSIAKDQTPREFLAKHRIAKAKALHRVPSRKEKMQALCEQRADKAWDAYIELNKNCKVGEGPLEYLKAAKDRCVEFFSPFTKYCNEAIRSLNPLVAILGPFKDGFWTCFNNLREKCLKMVNDHWLAFAAGTTLVLSLIFLLCIICLVKIFSILIANLGLGVVAITTLVTALVVGFFLFNGMLEQAADLQLCSLVASDFLNFLAQNQGSALVAGTMASVQDDLRGQGVSWCFSALYKLISRVVPVGIKETSILFNSIGNVSRSANHSKDFFLNMKEMACSWMDALSDAMALISDDSVSAMQVLKHLCEHDFLDWAKKVERYAGETYDSLIISPAERLKILRILADQQESFQKAFYNPRIASKAPRLMLTEFNRLSTLLRDAHNALSRASLFDRQRTPPFWVHLYSENGGTGKSMAMMPLGNHMLDAIGEPKTCRFVTRNVASKFLNGYQHQPCFLMDEFGAAPKQDYSDEVTMLDLVSPNALTLNMAAIGEKNTMFTSKLIISTANRRLAHPDVKLGANLDGFLRRRNILAEVVLVSGKPHFHEFNLLAPRTEQKVYLNRAMQESQVPDPLTPQEFYSLCTENFVNFLNQQSSTVAMSAGLNYVRSSDFSHLKDFLLFKIGLDFEENEVERIVTDYGNSLKNETIFPPEHEQIFQKWKDALDSLTLPELVSLLDKSVSETFVYTLISENHPNVVMSSLTPYECMIYAICKKKYREGTEAKLPFPEGETTSYGASFLSFVAQVALCIPKWALFCVALCAVLLVGYLIIKFAIFLFSGVVTLLGALAFSNLSGDGAEDSPSFDTNRKRGGVKFEYSTKWDASSTNRFAESYSENGTIPAGTSWADFFGEGPEEEPSQSLLNLLKHQVVLIAEPTKVVYNCIALGGRNFLITKHVWDLMPACNYGLYGYAVAKDRIFISPRIRPCAQLKGRDLVIVQLPDSVPPFTSLPRDIFLENMAKAPKTANACLVVAKPLFERRSVAKLEQTIYPFKQLPQVHSKDTYSCGSLGSKQMPACYSYVFETYAGLCTSPLIAQEGGRCIILGLHVVGDRSKMGYAQIVTLDDFSDVALSDKVGQGPEEMYIPTKNSECFGSVTKLGAWTGPKPYFLEKTSLIPSLISTSIDVERTTEPAILSQRDKRLKDSINPEFDVFLEGMKKYAVEAHSLDEDLEVFEDALDRVFLEIPEHACEDLTNDQVCNGIEDDPYAEGIVMQTAEGFPFCTQRPAGASGKSWLFAGAPGDWHIVPGSLLANEMHKKEVAPSRGLFEPLIGIDFPKDEKVDSSKVYIKPKTRLFTILPVDYNILVRKYFLSSVSHIMTQHNTIPVKVGIDCLSNEWSILYHQLRSKGTNWFNGDYSRFDGITPRNVLQGIVKRINKFYNNKNSLAITDSNLSINSDLARSLLTDMASTRYGLTNGDLWYVTSGIPSGFPLTVIVNSLVNNFFIHFSYIKLMKREELNSLYPLHSFRQMVAYATYGDDNLVSVNDVITEKFNLVKIADLLAEHGVTLKNGADKNEEILSPFYPLEKVDFLKRKFVHYQGHVVAPLNPVNITERLHWIRKGLGEADATLENCSSAAFEALFHGRCYYDTLVAKIYKACAASKLSIQLPTYNDALAIFLSNDSFAKAIQTISLDLPKAIFVNKSNYFVSEIFPDVFFCSNERNVTLHKLLEITTTRNICYISRNYESRNSSRGLFSLKGEGWALAPVSARLVVYKNMQKPVYFVDEANDGLALAYCLDYMLRIKGVSRSRLAQVLYNIFGHDETLCSRIASNFSLLDSNKYMPPHKK.

The span at 346 to 371 (SPTVTPSSTPSTSRSSSPEPRVSSPS) shows a compositional bias: low complexity. The interval 346 to 372 (SPTVTPSSTPSTSRSSSPEPRVSSPSG) is disordered. In terms of domain architecture, SF3 helicase spans 849-1020 (LRDAHNALSR…PHFHEFNLLA (172 aa)). The chain crosses the membrane as a helical span at residues 1225-1245 (VALCAVLLVGYLIIKFAIFLF). Residue Ser-1299 is modified to O-(5'-phospho-RNA)-serine. The Peptidase C3 domain occupies 1319-1532 (GPEEEPSQSL…YAQIVTLDDF (214 aa)). Catalysis depends on for picornain 3C-like protease activity residues His-1362, Asp-1400, and Cys-1495. The RdRp catalytic domain maps to 1814 to 1956 (TNWFNGDYSR…SVNDVITEKF (143 aa)).

It belongs to the comoviridae genome polyprotein B family. Post-translationally, specific enzymatic cleavages by picornain 3C-like protease in vivo yield mature proteins. Picornain 3C-like protease is autocatalytically processed. In terms of processing, viral genome-linked protein (VPg) is uridylylated by the polymerase and is covalently linked to the 5'-end of genomic RNA. This uridylylated form acts as a nucleotide-peptide primer for the polymerase.

The protein localises to the host membrane. The enzyme catalyses RNA(n) + a ribonucleoside 5'-triphosphate = RNA(n+1) + diphosphate. Picornain 3C-like protease is a thiol protease that probably cleaves the B and M polyproteins. In terms of biological role, viral genome-linked protein (VPg) plays a role in RNA replication. This is RNA1 polyprotein from Balsamorhiza sagittata (Apple).